The chain runs to 274 residues: Penicillin-insensitive murein endopeptidase (274 aa).

The signal sequence occupies residues 1–19; the sequence is MKKTAIALLAWFVSSASLA. Disulfide bonds link cysteine 44–cysteine 265, cysteine 187–cysteine 235, and cysteine 216–cysteine 223. Residues histidine 110, histidine 113, aspartate 120, aspartate 147, and histidine 150 each coordinate Zn(2+). A disordered region spans residues 225–274; the sequence is DQPLPPPGDGCGAELQSWFEPPKPGTTKPEKKTPPPLPPSCQALLDEHVL.

It belongs to the peptidase M74 family. As to quaternary structure, dimer. The cofactor is Zn(2+).

Its subcellular location is the periplasm. Functionally, murein endopeptidase that cleaves the D-alanyl-meso-2,6-diamino-pimelyl amide bond that connects peptidoglycan strands. Likely plays a role in the removal of murein from the sacculus. The polypeptide is Penicillin-insensitive murein endopeptidase (Salmonella paratyphi A (strain ATCC 9150 / SARB42)).